The primary structure comprises 842 residues: Probable cleavage and polyadenylation specificity factor subunit 2 (842 aa).

The span at 414-425 (AEETRIRMERAR) shows a compositional bias: basic and acidic residues. 2 disordered regions span residues 414–442 (AEET…DDIA) and 708–747 (METF…SIPI). Residues 432 to 441 (ESDDSDDDDI) show a composition bias toward acidic residues. Polar residues predominate over residues 731-747 (SNGQSKENDENASSIPI).

Belongs to the metallo-beta-lactamase superfamily. RNA-metabolizing metallo-beta-lactamase-like family. CPSF2/YSH1 subfamily. In terms of assembly, CPSF is a heterotetramer composed of four distinct subunits 160, 100, 70 and 30 kDa.

The protein resides in the nucleus. CPSF plays a key role in pre-mRNA 3'-end formation, recognizing the AAUAAA signal sequence and interacting with poly(A)polymerase and other factors to bring about cleavage and poly(A) addition. This is Probable cleavage and polyadenylation specificity factor subunit 2 from Caenorhabditis briggsae.